The chain runs to 112 residues: Glutaredoxin-C6 (112 aa).

A Glutaredoxin domain is found at 3-103 (LAKAKETVAS…PLLTEAGAIA (101 aa)). An intrachain disulfide couples Cys23 to Cys26.

This sequence belongs to the glutaredoxin family. CPYC subfamily. Post-translationally, the N-terminus is blocked. As to expression, expressed in aleurone layer.

Its subcellular location is the cytoplasm. Its function is as follows. Has a glutathione-disulfide oxidoreductase activity in the presence of NADPH and glutathione reductase. Reduces low molecular weight disulfides and proteins. Possesses thioltransferase, dehydroascorbate reductase and GSH-dependent peroxidase activities in vitro. In Oryza sativa subsp. japonica (Rice), this protein is Glutaredoxin-C6 (GRXC6).